A 325-amino-acid chain; its full sequence is Replication factor C small subunit (325 aa).

An ATP-binding site is contributed by 47 to 54 (GPPGTGKT).

This sequence belongs to the activator 1 small subunits family. RfcS subfamily. As to quaternary structure, heteromultimer composed of small subunits (RfcS) and large subunits (RfcL).

In terms of biological role, part of the RFC clamp loader complex which loads the PCNA sliding clamp onto DNA. The polypeptide is Replication factor C small subunit (Aeropyrum pernix (strain ATCC 700893 / DSM 11879 / JCM 9820 / NBRC 100138 / K1)).